The primary structure comprises 911 residues: Gem-associated protein 4a (911 aa).

In terms of assembly, component of the core survival motor neuron (SMN) complex composed of Smn, Gem2, Gem3, rig/Gem5 and one of 3 almost identical Gem4 paralogs encoded by Glos/Gem4a, Gem4b or Gem4c. Interacts with Smn; the interaction is probably indirect.

In terms of biological role, component of the survival motor neuron (SMN) complex that catalyzes the assembly of small nuclear ribonucleoproteins (snRNPs), the building blocks of the spliceosome, and thereby plays an important role in the splicing of cellular pre-mRNAs. One of 3 almost identical paralogs (Glos/Gem4a, Gem4b and Gem4c), resulting from a genomic triplication, that have some redundant function. Required for neuromuscular function and organismal viability. The protein is Gem-associated protein 4a of Drosophila melanogaster (Fruit fly).